A 508-amino-acid polypeptide reads, in one-letter code: ATP synthase subunit alpha (508 aa).

169–176 (GDRGTGKS) is a binding site for ATP.

Belongs to the ATPase alpha/beta chains family. F-type ATPases have 2 components, CF(1) - the catalytic core - and CF(0) - the membrane proton channel. CF(1) has five subunits: alpha(3), beta(3), gamma(1), delta(1), epsilon(1). CF(0) has three main subunits: a(1), b(2) and c(9-12). The alpha and beta chains form an alternating ring which encloses part of the gamma chain. CF(1) is attached to CF(0) by a central stalk formed by the gamma and epsilon chains, while a peripheral stalk is formed by the delta and b chains.

It is found in the cell membrane. The enzyme catalyses ATP + H2O + 4 H(+)(in) = ADP + phosphate + 5 H(+)(out). In terms of biological role, produces ATP from ADP in the presence of a proton gradient across the membrane. The alpha chain is a regulatory subunit. The protein is ATP synthase subunit alpha of Natranaerobius thermophilus (strain ATCC BAA-1301 / DSM 18059 / JW/NM-WN-LF).